The chain runs to 144 residues: Transcriptional regulator MraZ (144 aa).

2 consecutive SpoVT-AbrB domains span residues 4–47 (EYKN…TADK) and 77–120 (AQEI…DLKQ).

This sequence belongs to the MraZ family. Forms oligomers.

It is found in the cytoplasm. The protein localises to the nucleoid. This is Transcriptional regulator MraZ from Treponema denticola (strain ATCC 35405 / DSM 14222 / CIP 103919 / JCM 8153 / KCTC 15104).